The following is a 217-amino-acid chain: 3-demethoxyubiquinol 3-hydroxylase (217 aa).

Positions 66, 96, 99, 148, 180, and 183 each coordinate Fe cation.

It belongs to the COQ7 family. Fe cation serves as cofactor.

Its subcellular location is the cell membrane. It catalyses the reaction a 5-methoxy-2-methyl-3-(all-trans-polyprenyl)benzene-1,4-diol + AH2 + O2 = a 3-demethylubiquinol + A + H2O. It participates in cofactor biosynthesis; ubiquinone biosynthesis. Catalyzes the hydroxylation of 2-nonaprenyl-3-methyl-6-methoxy-1,4-benzoquinol during ubiquinone biosynthesis. This chain is 3-demethoxyubiquinol 3-hydroxylase, found in Xanthomonas axonopodis pv. citri (strain 306).